A 479-amino-acid chain; its full sequence is Protein C-ets-2 (479 aa).

The PNT domain maps to 88-173 (DTFSGFTKEQ…EHLEQMIKDS (86 aa)). A DNA-binding region (ETS) is located at residues 373 to 453 (IQLWQFLLEL…SGKRYVYRFV (81 aa)).

Belongs to the ETS family.

It is found in the nucleus. Its function is as follows. Probable transcription factor. The sequence is that of Protein C-ets-2 (ETS2) from Gallus gallus (Chicken).